A 28-amino-acid polypeptide reads, in one-letter code: Endoglucanase (28 aa).

The active-site Nucleophile is the Glu-20.

Belongs to the glycosyl hydrolase 5 (cellulase A) family.

The protein localises to the cell membrane. It carries out the reaction Endohydrolysis of (1-&gt;4)-beta-D-glucosidic linkages in cellulose, lichenin and cereal beta-D-glucans.. In Schizophyllum commune (Split gill fungus), this protein is Endoglucanase.